The primary structure comprises 505 residues: ATP synthase subunit alpha (505 aa).

170–177 is a binding site for ATP; it reads GDRQTGKT.

The protein belongs to the ATPase alpha/beta chains family. F-type ATPases have 2 components, CF(1) - the catalytic core - and CF(0) - the membrane proton channel. CF(1) has five subunits: alpha(3), beta(3), gamma(1), delta(1), epsilon(1). CF(0) has four main subunits: a, b, b' and c.

The protein localises to the cellular thylakoid membrane. The enzyme catalyses ATP + H2O + 4 H(+)(in) = ADP + phosphate + 5 H(+)(out). Its function is as follows. Produces ATP from ADP in the presence of a proton gradient across the membrane. The alpha chain is a regulatory subunit. The protein is ATP synthase subunit alpha of Cyanothece sp. (strain PCC 7425 / ATCC 29141).